The following is a 394-amino-acid chain: Elongation factor Tu 2 (394 aa).

A tr-type G domain is found at 10 to 204; sequence KPHVNVGTIG…HLDTYIPEPE (195 aa). Residues 19–26 form a G1 region; sequence GHVDHGKT. 19–26 contacts GTP; sequence GHVDHGKT. Threonine 26 provides a ligand contact to Mg(2+). A G2 region spans residues 60–64; it reads GITIN. The tract at residues 81–84 is G3; sequence DCPG. GTP contacts are provided by residues 81–85 and 136–139; these read DCPGH and NKCD. A G4 region spans residues 136 to 139; it reads NKCD. Residues 174-176 form a G5 region; that stretch reads SAL.

This sequence belongs to the TRAFAC class translation factor GTPase superfamily. Classic translation factor GTPase family. EF-Tu/EF-1A subfamily. In terms of assembly, monomer.

It localises to the cytoplasm. The catalysed reaction is GTP + H2O = GDP + phosphate + H(+). In terms of biological role, GTP hydrolase that promotes the GTP-dependent binding of aminoacyl-tRNA to the A-site of ribosomes during protein biosynthesis. The chain is Elongation factor Tu 2 from Haemophilus influenzae (strain 86-028NP).